The chain runs to 74 residues: UPF0291 protein EF_0064 (74 aa).

The segment at 53 to 74 (YDPTGEDVTPEKLKEEQQKYFD) is disordered. Residues 61–74 (TPEKLKEEQQKYFD) are compositionally biased toward basic and acidic residues.

The protein belongs to the UPF0291 family.

It is found in the cytoplasm. This Enterococcus faecalis (strain ATCC 700802 / V583) protein is UPF0291 protein EF_0064.